The primary structure comprises 394 residues: Elongation factor Tu (394 aa).

The tr-type G domain maps to 10–204 (KPHVNVGTIG…ALDTYIPEPE (195 aa)). A G1 region spans residues 19–26 (GHVDHGKT). 19 to 26 (GHVDHGKT) provides a ligand contact to GTP. Mg(2+) is bound at residue T26. A G2 region spans residues 60-64 (GITIN). The G3 stretch occupies residues 81 to 84 (DCPG). Residues 81 to 85 (DCPGH) and 136 to 139 (NKCD) each bind GTP. Residues 136-139 (NKCD) are G4. The interval 174–176 (SAL) is G5.

Belongs to the TRAFAC class translation factor GTPase superfamily. Classic translation factor GTPase family. EF-Tu/EF-1A subfamily. In terms of assembly, monomer.

The protein resides in the cytoplasm. The enzyme catalyses GTP + H2O = GDP + phosphate + H(+). Functionally, GTP hydrolase that promotes the GTP-dependent binding of aminoacyl-tRNA to the A-site of ribosomes during protein biosynthesis. This chain is Elongation factor Tu, found in Colwellia psychrerythraea (strain 34H / ATCC BAA-681) (Vibrio psychroerythus).